The sequence spans 84 residues: Small ribosomal subunit protein uS17 (84 aa).

The protein belongs to the universal ribosomal protein uS17 family. Part of the 30S ribosomal subunit.

In terms of biological role, one of the primary rRNA binding proteins, it binds specifically to the 5'-end of 16S ribosomal RNA. This is Small ribosomal subunit protein uS17 from Clostridium botulinum (strain 657 / Type Ba4).